A 521-amino-acid polypeptide reads, in one-letter code: Probable cytosol aminopeptidase (521 aa).

Lysine 268 and aspartate 273 together coordinate Mn(2+). Lysine 280 is a catalytic residue. 3 residues coordinate Mn(2+): aspartate 291, aspartate 350, and glutamate 352. Residue arginine 354 is part of the active site.

It belongs to the peptidase M17 family. The cofactor is Mn(2+).

Its subcellular location is the cytoplasm. It catalyses the reaction Release of an N-terminal amino acid, Xaa-|-Yaa-, in which Xaa is preferably Leu, but may be other amino acids including Pro although not Arg or Lys, and Yaa may be Pro. Amino acid amides and methyl esters are also readily hydrolyzed, but rates on arylamides are exceedingly low.. The enzyme catalyses Release of an N-terminal amino acid, preferentially leucine, but not glutamic or aspartic acids.. Functionally, presumably involved in the processing and regular turnover of intracellular proteins. Catalyzes the removal of unsubstituted N-terminal amino acids from various peptides. This is Probable cytosol aminopeptidase from Chromobacterium violaceum (strain ATCC 12472 / DSM 30191 / JCM 1249 / CCUG 213 / NBRC 12614 / NCIMB 9131 / NCTC 9757 / MK).